The sequence spans 289 residues: Acetyl-coenzyme A carboxylase carboxyl transferase subunit beta (289 aa).

The 263-residue stretch at Leu-27–Ala-289 folds into the CoA carboxyltransferase N-terminal domain. Positions 31, 34, 50, and 53 each coordinate Zn(2+). The segment at Cys-31–Cys-53 adopts a C4-type zinc-finger fold.

It belongs to the AccD/PCCB family. As to quaternary structure, acetyl-CoA carboxylase is a heterohexamer composed of biotin carboxyl carrier protein (AccB), biotin carboxylase (AccC) and two subunits each of ACCase subunit alpha (AccA) and ACCase subunit beta (AccD). Zn(2+) is required as a cofactor.

The protein localises to the cytoplasm. The enzyme catalyses N(6)-carboxybiotinyl-L-lysyl-[protein] + acetyl-CoA = N(6)-biotinyl-L-lysyl-[protein] + malonyl-CoA. It functions in the pathway lipid metabolism; malonyl-CoA biosynthesis; malonyl-CoA from acetyl-CoA: step 1/1. Component of the acetyl coenzyme A carboxylase (ACC) complex. Biotin carboxylase (BC) catalyzes the carboxylation of biotin on its carrier protein (BCCP) and then the CO(2) group is transferred by the transcarboxylase to acetyl-CoA to form malonyl-CoA. The sequence is that of Acetyl-coenzyme A carboxylase carboxyl transferase subunit beta from Methylobacillus flagellatus (strain ATCC 51484 / DSM 6875 / VKM B-1610 / KT).